Reading from the N-terminus, the 925-residue chain is Aspulvinone E synthetase melA (925 aa).

The interval 11–434 (ETAAARNGDG…GGRAKETIII (424 aa)) is adenylation (A) domain. A Carrier domain is found at 564-644 (SPKNDFEKGL…ELAAALDNLY (81 aa)). At Ser601 the chain carries O-(pantetheine 4'-phosphoryl)serine. The interval 663-923 (PLWLVHPGAG…KILRSALAER (261 aa)) is thioesterase (TE) domain.

Belongs to the NRP synthetase family.

It is found in the cytoplasm. The enzyme catalyses 2 3-(4-hydroxyphenyl)pyruvate + AH2 + 2 ATP + O2 = aspulvinone E + A + 2 AMP + CO2 + 2 diphosphate + H2O + H(+). In terms of biological role, nonribosomal peptide synthase; part of the gene cluster that mediates the biosynthesis of Asp-melanin, a pigment that confers resistance against UV light and hampers phagocytosis by soil amoeba. The nonribosomal peptide synthase melA converts 4-hydroxyphenylpyruvate (4-HPPA) to aspulvinone E. The tyrosinase tyrP then performs hydroxylations of both aromatic moieties of aspulvinone E. The product of tyrP is highly unstable, and, due to the high reactivity of methides and ortho-diquinones, the polymeric Asp-melanin forms spontaneously. This chain is Aspulvinone E synthetase melA, found in Aspergillus terreus (strain NIH 2624 / FGSC A1156).